The following is a 517-amino-acid chain: Variant surface glycoprotein MVAT5 (517 aa).

Residues 1–21 form the signal peptide; the sequence is MIGKAFIILSLLNELPTPTAA. Disulfide bonds link Cys-417–Cys-430 and Cys-426–Cys-443. Residue Asn-435 is glycosylated (N-linked (GlcNAc...) asparagine). The segment covering 454-470 has biased composition (low complexity); the sequence is QAAQTAGAGEGAAGTTT. Residues 454-487 are disordered; that stretch reads QAAQTAGAGEGAAGTTTDKCKDKKKDDCKSPDCK. A compositionally biased stretch (basic and acidic residues) spans 471 to 487; that stretch reads DKCKDKKKDDCKSPDCK. Residue Asp-495 is the site of GPI-anchor amidated aspartate attachment. Positions 496-517 are cleaved as a propeptide — removed in mature form; that stretch reads SSILLNKQFALMVSAAFVALLF.

The protein resides in the cell membrane. Functionally, VSG forms a coat on the surface of the parasite. The trypanosome evades the immune response of the host by expressing a series of antigenically distinct VSGs from an estimated 1000 VSG genes. This is Variant surface glycoprotein MVAT5 from Trypanosoma brucei rhodesiense.